A 155-amino-acid chain; its full sequence is Transcription antitermination protein NusB (155 aa).

Belongs to the NusB family.

In terms of biological role, involved in transcription antitermination. Required for transcription of ribosomal RNA (rRNA) genes. Binds specifically to the boxA antiterminator sequence of the ribosomal RNA (rrn) operons. The protein is Transcription antitermination protein NusB of Aliivibrio fischeri (strain ATCC 700601 / ES114) (Vibrio fischeri).